The chain runs to 89 residues: Small ribosomal subunit protein uS14A (89 aa).

This sequence belongs to the universal ribosomal protein uS14 family. In terms of assembly, part of the 30S ribosomal subunit. Contacts proteins S3 and S10.

Its function is as follows. Binds 16S rRNA, required for the assembly of 30S particles and may also be responsible for determining the conformation of the 16S rRNA at the A site. This chain is Small ribosomal subunit protein uS14A, found in Lacticaseibacillus paracasei (strain ATCC 334 / BCRC 17002 / CCUG 31169 / CIP 107868 / KCTC 3260 / NRRL B-441) (Lactobacillus paracasei).